The sequence spans 450 residues: MTVNAKTSPSAGNTWRDLPAAQQPEYPDTEALRAVIADLESYPPLVFAGECDQLRARMAAVAKGEAFLLQGGDCAEAFDAVSADHIRNKLKTLLQMGAVLTYAASVPVVKVGRIAGQYSKPRSKPTETRDGVTLPTYRGDSVNGFDFTEAARIPDPERLKRMYHASASTLNLVRAFTTGGYADLRQVHAWNQDFVKSSPSGQRYEQLAREIDNALNFMRACGTDPAEFQTVEFFSSHEALLLDYESALTRVDSRTGQLYDVSGHMVWIGERTRQLDHAHIEFASRIRNPIGIKLGPSTTAEEALQYIERLDPEREPGRLTFIVRMGADKIRDKLPELVEKVTASGATVAWITDPMHGNTYEAASGHKTRRFDDVLDEVKGFFEVHKSLGTHPGGIHVELTGDDVTECVGGGDEIFVDDLHQRYETACDPRLNRSQSLDLAFLVAEMYRDQ.

Residues 1–13 (MTVNAKTSPSAGN) show a composition bias toward polar residues. Positions 1-20 (MTVNAKTSPSAGNTWRDLPA) are disordered.

It belongs to the class-II DAHP synthase family. As to quaternary structure, homodimer.

The enzyme catalyses D-erythrose 4-phosphate + phosphoenolpyruvate + H2O = 7-phospho-2-dehydro-3-deoxy-D-arabino-heptonate + phosphate. It functions in the pathway metabolic intermediate biosynthesis; chorismate biosynthesis; chorismate from D-erythrose 4-phosphate and phosphoenolpyruvate: step 1/7. This chain is Phospho-2-dehydro-3-deoxyheptonate aldolase (aroH), found in Streptomyces coelicolor (strain ATCC BAA-471 / A3(2) / M145).